The sequence spans 238 residues: Ribonuclease PH (238 aa).

Phosphate is bound by residues Arg-86 and 124–126 (GTR).

The protein belongs to the RNase PH family. Homohexameric ring arranged as a trimer of dimers.

It carries out the reaction tRNA(n+1) + phosphate = tRNA(n) + a ribonucleoside 5'-diphosphate. Phosphorolytic 3'-5' exoribonuclease that plays an important role in tRNA 3'-end maturation. Removes nucleotide residues following the 3'-CCA terminus of tRNAs; can also add nucleotides to the ends of RNA molecules by using nucleoside diphosphates as substrates, but this may not be physiologically important. Probably plays a role in initiation of 16S rRNA degradation (leading to ribosome degradation) during starvation. The polypeptide is Ribonuclease PH (Acinetobacter baumannii (strain AB307-0294)).